The following is a 331-amino-acid chain: Small ribosomal subunit protein uS2 (331 aa).

Belongs to the universal ribosomal protein uS2 family.

In Rhodopseudomonas palustris (strain ATCC BAA-98 / CGA009), this protein is Small ribosomal subunit protein uS2.